We begin with the raw amino-acid sequence, 394 residues long: Mannosyl-3-phosphoglycerate synthase (394 aa).

It belongs to the glycosyltransferase 2 family.

Its subcellular location is the cytoplasm. It carries out the reaction (2R)-3-phosphoglycerate + GDP-alpha-D-mannose = 2-O-(alpha-D-mannosyl)-3-phosphoglycerate + GDP + H(+). It participates in carbohydrate biosynthesis; 2-(alpha-D-mannosyl)-D-glycerate biosynthesis; 2-(alpha-D-mannosyl)-D-glycerate from GDP-alpha-D-mannose (MPG route): step 1/2. Transfers a mannosyl group from GDP-mannose to phosphoglycerate to form mannosyl-3-phosphoglycerate (MPG). The polypeptide is Mannosyl-3-phosphoglycerate synthase (mngA) (Pyrococcus furiosus (strain ATCC 43587 / DSM 3638 / JCM 8422 / Vc1)).